Reading from the N-terminus, the 184-residue chain is ATP synthase subunit b, chloroplastic (184 aa).

Residues 27–49 (LATNPINLSVVFGVLIFFGKGVL) form a helical membrane-spanning segment.

Belongs to the ATPase B chain family. In terms of assembly, F-type ATPases have 2 components, F(1) - the catalytic core - and F(0) - the membrane proton channel. F(1) has five subunits: alpha(3), beta(3), gamma(1), delta(1), epsilon(1). F(0) has four main subunits: a(1), b(1), b'(1) and c(10-14). The alpha and beta chains form an alternating ring which encloses part of the gamma chain. F(1) is attached to F(0) by a central stalk formed by the gamma and epsilon chains, while a peripheral stalk is formed by the delta, b and b' chains.

The protein resides in the plastid. The protein localises to the chloroplast thylakoid membrane. F(1)F(0) ATP synthase produces ATP from ADP in the presence of a proton or sodium gradient. F-type ATPases consist of two structural domains, F(1) containing the extramembraneous catalytic core and F(0) containing the membrane proton channel, linked together by a central stalk and a peripheral stalk. During catalysis, ATP synthesis in the catalytic domain of F(1) is coupled via a rotary mechanism of the central stalk subunits to proton translocation. Its function is as follows. Component of the F(0) channel, it forms part of the peripheral stalk, linking F(1) to F(0). The chain is ATP synthase subunit b, chloroplastic from Arabidopsis thaliana (Mouse-ear cress).